A 203-amino-acid chain; its full sequence is Histidine biosynthesis bifunctional protein HisIE (203 aa).

The segment at 1–114 (MLTEQQRREL…FGDTAHQWLF (114 aa)) is phosphoribosyl-AMP cyclohydrolase. The tract at residues 115-203 (LYQLEQLLAE…VIENLRKRHQ (89 aa)) is phosphoribosyl-ATP pyrophosphohydrolase.

The protein in the N-terminal section; belongs to the PRA-CH family. It in the C-terminal section; belongs to the PRA-PH family.

The protein localises to the cytoplasm. It catalyses the reaction 1-(5-phospho-beta-D-ribosyl)-ATP + H2O = 1-(5-phospho-beta-D-ribosyl)-5'-AMP + diphosphate + H(+). It carries out the reaction 1-(5-phospho-beta-D-ribosyl)-5'-AMP + H2O = 1-(5-phospho-beta-D-ribosyl)-5-[(5-phospho-beta-D-ribosylamino)methylideneamino]imidazole-4-carboxamide. It participates in amino-acid biosynthesis; L-histidine biosynthesis; L-histidine from 5-phospho-alpha-D-ribose 1-diphosphate: step 2/9. Its pathway is amino-acid biosynthesis; L-histidine biosynthesis; L-histidine from 5-phospho-alpha-D-ribose 1-diphosphate: step 3/9. The protein is Histidine biosynthesis bifunctional protein HisIE of Shigella sonnei (strain Ss046).